Here is a 157-residue protein sequence, read N- to C-terminus: Deoxyuridine 5'-triphosphate nucleotidohydrolase (157 aa).

Substrate is bound by residues 76-78 (RSG), asparagine 89, 93-95 (TID), and lysine 103.

Belongs to the dUTPase family. Mg(2+) is required as a cofactor.

The catalysed reaction is dUTP + H2O = dUMP + diphosphate + H(+). Its pathway is pyrimidine metabolism; dUMP biosynthesis; dUMP from dCTP (dUTP route): step 2/2. Its function is as follows. This enzyme is involved in nucleotide metabolism: it produces dUMP, the immediate precursor of thymidine nucleotides and it decreases the intracellular concentration of dUTP so that uracil cannot be incorporated into DNA. The polypeptide is Deoxyuridine 5'-triphosphate nucleotidohydrolase (Brucella abortus (strain 2308)).